The following is a 202-amino-acid chain: Imidazoleglycerol-phosphate dehydratase (202 aa).

The protein belongs to the imidazoleglycerol-phosphate dehydratase family.

It localises to the cytoplasm. It carries out the reaction D-erythro-1-(imidazol-4-yl)glycerol 3-phosphate = 3-(imidazol-4-yl)-2-oxopropyl phosphate + H2O. Its pathway is amino-acid biosynthesis; L-histidine biosynthesis; L-histidine from 5-phospho-alpha-D-ribose 1-diphosphate: step 6/9. The polypeptide is Imidazoleglycerol-phosphate dehydratase (Acinetobacter baylyi (strain ATCC 33305 / BD413 / ADP1)).